The following is a 1064-amino-acid chain: Leucine--tRNA ligase (1064 aa).

The segment at 1 to 25 (MARAMSETAEPGARTGAADTTVAPT) is disordered. The 'HIGH' region motif lies at 106–117 (PYPSGSGLHVGH). Residues 435–456 (GRPGGGTEPADTAGPEAGADPA) are disordered. A 'KMSKS' region motif is present at residues 831–835 (KMGKS). Lys-834 is an ATP binding site.

This sequence belongs to the class-I aminoacyl-tRNA synthetase family.

Its subcellular location is the cytoplasm. The catalysed reaction is tRNA(Leu) + L-leucine + ATP = L-leucyl-tRNA(Leu) + AMP + diphosphate. This is Leucine--tRNA ligase from Frankia casuarinae (strain DSM 45818 / CECT 9043 / HFP020203 / CcI3).